We begin with the raw amino-acid sequence, 256 residues long: Phosphate import ATP-binding protein PstB (256 aa).

One can recognise an ABC transporter domain in the interval 10 to 251 (IRTVNVNFYY…PEQKQTEDYI (242 aa)). Residue 42–49 (GPSGCGKS) coordinates ATP.

This sequence belongs to the ABC transporter superfamily. Phosphate importer (TC 3.A.1.7) family. The complex is composed of two ATP-binding proteins (PstB), two transmembrane proteins (PstC and PstA) and a solute-binding protein (PstS).

It is found in the cell inner membrane. It catalyses the reaction phosphate(out) + ATP + H2O = ADP + 2 phosphate(in) + H(+). Part of the ABC transporter complex PstSACB involved in phosphate import. Responsible for energy coupling to the transport system. This chain is Phosphate import ATP-binding protein PstB, found in Syntrophus aciditrophicus (strain SB).